Reading from the N-terminus, the 331-residue chain is High-affinity nickel-transport protein NixA (331 aa).

Residues 1 to 5 (MKLWF) are Cytoplasmic-facing. The helical transmembrane segment at 6–26 (PYFLAIVFLHALGLALLFMAN) threads the bilayer. The Periplasmic portion of the chain corresponds to 27 to 33 (NASFYAA). The helical transmembrane segment at 34-54 (ASMAYMLGAKHAFDADHIACI) threads the bilayer. Topologically, residues 55–66 (DNTIRKLTQQGK) are cytoplasmic. Residues 67 to 87 (NAYGVGFYFSMGHSSVVILMT) form a helical membrane-spanning segment. Residues 88 to 113 (IISAFAIAWAKEHTPMLEEIGGVVGT) lie on the Periplasmic side of the membrane. A helical transmembrane segment spans residues 114 to 135 (LVSGLFLLIIGLLNAIILLDLL). Over 136 to 178 (KIFKKSHSNESLSQQQNEEIERLLTSRGLLNRFFKPLFNFVSK) the chain is Cytoplasmic. The chain crosses the membrane as a helical span at residues 179 to 199 (SWHIYPIGFLFGLGFDTASEI). Over 200–225 (ALLALSSSAIKVSMVGMLSLPILFAA) the chain is Periplasmic. Residues 226–246 (GMSLFDTLDGAFMLKAYDWAF) traverse the membrane as a helical segment. The Cytoplasmic portion of the chain corresponds to 247–252 (KTPLRK). A helical transmembrane segment spans residues 253-273 (IYYNISITALSVFIALFIGLI). The Periplasmic segment spans residues 274–302 (ELFQVVSEKLHLKFENRLLRALQSLEFTD). Residues 303–322 (LGYYLVGLFVIAFLGSFFLW) traverse the membrane as a helical segment. The Cytoplasmic segment spans residues 323-331 (KIKFSKLES).

This sequence belongs to the NiCoT transporter (TC 2.A.52) family.

It is found in the cell inner membrane. Functionally, high-affinity nickel intake protein. Imports nickel ions in an energy-dependent fashion. Necessary for the expression of catalytically active urease. This Helicobacter pylori (strain ATCC 700392 / 26695) (Campylobacter pylori) protein is High-affinity nickel-transport protein NixA (nixA).